The following is a 400-amino-acid chain: Argininosuccinate synthase (400 aa).

8–16 serves as a coordination point for ATP; that stretch reads AYSGGLDTS. Position 87 (Tyr-87) interacts with L-citrulline. Gly-117 lines the ATP pocket. L-aspartate contacts are provided by Thr-119, Asn-123, and Asp-124. An L-citrulline-binding site is contributed by Asn-123. Residues Arg-127, Ser-175, Glu-260, and Tyr-272 each contribute to the L-citrulline site.

Belongs to the argininosuccinate synthase family. Type 1 subfamily. Homotetramer.

It localises to the cytoplasm. The catalysed reaction is L-citrulline + L-aspartate + ATP = 2-(N(omega)-L-arginino)succinate + AMP + diphosphate + H(+). It participates in amino-acid biosynthesis; L-arginine biosynthesis; L-arginine from L-ornithine and carbamoyl phosphate: step 2/3. This chain is Argininosuccinate synthase, found in Mycobacterium sp. (strain KMS).